The following is a 297-amino-acid chain: UDP-N-acetylenolpyruvoylglucosamine reductase (297 aa).

Positions 27–192 (IGGPADALLE…LRAAYRLHPG (166 aa)) constitute an FAD-binding PCMH-type domain. Arg-170 is an active-site residue. Residue Ser-220 is the Proton donor of the active site. Glu-290 is an active-site residue.

Belongs to the MurB family. Requires FAD as cofactor.

It is found in the cytoplasm. It catalyses the reaction UDP-N-acetyl-alpha-D-muramate + NADP(+) = UDP-N-acetyl-3-O-(1-carboxyvinyl)-alpha-D-glucosamine + NADPH + H(+). It participates in cell wall biogenesis; peptidoglycan biosynthesis. Its function is as follows. Cell wall formation. The sequence is that of UDP-N-acetylenolpyruvoylglucosamine reductase from Rubrobacter xylanophilus (strain DSM 9941 / JCM 11954 / NBRC 16129 / PRD-1).